The sequence spans 293 residues: MAITAQMVKELREKTGAGMMDCKKALTETDGNMDKAIDLLREKGIAKAAKKADRIAAEGLTLIKTDGNTGVILEVNSETDFVAKNEGFKELLNDLADHILAEKPESVEAAMGQKMANGSTVEEYITSAVAKIGEKITLRRFAVLTKGDDAAFGAYLHMGGKIGVLTVLNGTTDEETARDIAMHVAAVNPRFISRDQVSEEEANREREILTQQALQEGKPENIVAKMVEGRLNKYFEEICLLDQAFVKNPDEKVKQVVAAKNATVETFVRYEVGEGIEKRQENFAEEVMNQVKK.

The tract at residues 79–82 (TDFV) is involved in Mg(2+) ion dislocation from EF-Tu.

Belongs to the EF-Ts family.

The protein localises to the cytoplasm. Functionally, associates with the EF-Tu.GDP complex and induces the exchange of GDP to GTP. It remains bound to the aminoacyl-tRNA.EF-Tu.GTP complex up to the GTP hydrolysis stage on the ribosome. In Bacillus licheniformis (strain ATCC 14580 / DSM 13 / JCM 2505 / CCUG 7422 / NBRC 12200 / NCIMB 9375 / NCTC 10341 / NRRL NRS-1264 / Gibson 46), this protein is Elongation factor Ts.